Reading from the N-terminus, the 188-residue chain is dCTP deaminase (188 aa).

DCTP contacts are provided by residues 111–116, 135–137, glutamine 156, tyrosine 170, and glutamine 180; these read KSTYAR and TLE. Glutamate 137 serves as the catalytic Proton donor/acceptor.

It belongs to the dCTP deaminase family. Homotrimer.

The enzyme catalyses dCTP + H2O + H(+) = dUTP + NH4(+). It functions in the pathway pyrimidine metabolism; dUMP biosynthesis; dUMP from dCTP (dUTP route): step 1/2. In terms of biological role, catalyzes the deamination of dCTP to dUTP. This chain is dCTP deaminase, found in Chromohalobacter salexigens (strain ATCC BAA-138 / DSM 3043 / CIP 106854 / NCIMB 13768 / 1H11).